A 457-amino-acid chain; its full sequence is F-box only protein 13 (457 aa).

The region spanning 64-110 (EFPMDDLNDDVLERVLSWLPTSCFFRMSSVCKRWKSSQTSKSFKLAC) is the F-box domain.

This is F-box only protein 13 (FBX13) from Arabidopsis thaliana (Mouse-ear cress).